A 694-amino-acid chain; its full sequence is Beta-mannosyltransferase 8 (694 aa).

Residues 1–11 lie on the Cytoplasmic side of the membrane; sequence MKFPKLRKRTV. The chain crosses the membrane as a helical span at residues 12 to 29; it reads YWAVLTVFALFTIHFVFQ. Topologically, residues 30–694 are extracellular; sequence YKEHNSHRVQ…YLYDHASVNS (665 aa). N-linked (GlcNAc...) asparagine glycosylation is found at asparagine 101 and asparagine 542.

It belongs to the BMT family.

Its subcellular location is the membrane. Its function is as follows. Beta-mannosyltransferase involved in cell wall biosynthesis through beta-1,2-mannosylation of cell wall phosphopeptidomannan. Plays a role in the ability to produce hyphae in the presence of three bacterial species. The polypeptide is Beta-mannosyltransferase 8 (BMT8) (Candida albicans (strain SC5314 / ATCC MYA-2876) (Yeast)).